The chain runs to 195 residues: Small ribosomal subunit protein uS4 (195 aa).

The S4 RNA-binding domain occupies 92-152 (SRLDNIVYRL…EKHKHKANKN (61 aa)).

It belongs to the universal ribosomal protein uS4 family. In terms of assembly, part of the 30S ribosomal subunit. Contacts protein S5. The interaction surface between S4 and S5 is involved in control of translational fidelity.

Its function is as follows. One of the primary rRNA binding proteins, it binds directly to 16S rRNA where it nucleates assembly of the body of the 30S subunit. With S5 and S12 plays an important role in translational accuracy. The sequence is that of Small ribosomal subunit protein uS4 from Karelsulcia muelleri (strain GWSS) (Sulcia muelleri).